The chain runs to 239 residues: Pyridoxine 5'-phosphate synthase (239 aa).

Asn7 is a binding site for 3-amino-2-oxopropyl phosphate. 1-deoxy-D-xylulose 5-phosphate is bound at residue 9-10 (DH). Arg18 is a 3-amino-2-oxopropyl phosphate binding site. His43 (proton acceptor) is an active-site residue. The 1-deoxy-D-xylulose 5-phosphate site is built by Arg45 and His50. Catalysis depends on Glu70, which acts as the Proton acceptor. Thr100 contacts 1-deoxy-D-xylulose 5-phosphate. His192 serves as the catalytic Proton donor. 3-amino-2-oxopropyl phosphate-binding positions include Gly193 and 214-215 (GH).

This sequence belongs to the PNP synthase family. In terms of assembly, homooctamer; tetramer of dimers.

Its subcellular location is the cytoplasm. It carries out the reaction 3-amino-2-oxopropyl phosphate + 1-deoxy-D-xylulose 5-phosphate = pyridoxine 5'-phosphate + phosphate + 2 H2O + H(+). The protein operates within cofactor biosynthesis; pyridoxine 5'-phosphate biosynthesis; pyridoxine 5'-phosphate from D-erythrose 4-phosphate: step 5/5. Catalyzes the complicated ring closure reaction between the two acyclic compounds 1-deoxy-D-xylulose-5-phosphate (DXP) and 3-amino-2-oxopropyl phosphate (1-amino-acetone-3-phosphate or AAP) to form pyridoxine 5'-phosphate (PNP) and inorganic phosphate. In Pelagibacter ubique (strain HTCC1062), this protein is Pyridoxine 5'-phosphate synthase.